Here is a 170-residue protein sequence, read N- to C-terminus: Cathelicidin antimicrobial peptide (170 aa).

Positions 1-30 (MKTQRHGPSLGRWSLVLLLLGLVMPLAIVA) are cleaved as a signal peptide. The propeptide at 31–131 (QVLSYQEAVL…DISCDKDNRR (101 aa)) is cathelin-like domain (CLD). Intrachain disulfides connect Cys86–Cys97 and Cys108–Cys125. An active core region spans residues 150–162 (LKKIGQKIKDFLG).

The protein belongs to the cathelicidin family. As to quaternary structure, monomer, homodimer or homotrimer (in vitro). Oligomerizes as tetra- or hexamer in solution (in vitro). Proteolytically cleaved by proteinase PRTN3 into antibacterial peptide LL-37. Proteolytically cleaved by cathepsin CTSG and neutrophil elastase ELANE. Post-translationally, resistant to proteolytic degradation in solution, and when bound to both zwitterionic (mimicking mammalian membranes) and negatively charged membranes (mimicking bacterial membranes). In terms of processing, after secretion onto the skin surface, the CAMP gene product is processed by a serine protease-dependent mechanism into multiple novel antimicrobial peptides distinct from and shorter than cathelicidin LL-37. These peptides show enhanced antimicrobial action, acquiring the ability to kill skin pathogens such as S.aureus, E.coli and C.albicans. These peptides have lost the ability to stimulate CXCL8/IL8 release from keratinocytes. The peptides act synergistically, killing bacteria at lower concentrations when present together, and maintain activity at increased salt condition.

The protein resides in the secreted. The protein localises to the vesicle. In terms of biological role, antimicrobial protein that is an integral component of the innate immune system. Binds to bacterial lipopolysaccharides (LPS). Acts via neutrophil N-formyl peptide receptors to enhance the release of CXCL2. Postsecretory processing generates multiple cathelicidin antimicrobial peptides with various lengths which act as a topical antimicrobial defense in sweat on skin. The unprocessed precursor form, cathelicidin antimicrobial peptide, inhibits the growth of Gram-negative E.coli and E.aerogenes with efficiencies comparable to that of the mature peptide LL-37 (in vitro). Its function is as follows. Antimicrobial peptide that is an integral component of the innate immune system. Binds to bacterial lipopolysaccharides (LPS). Causes membrane permeabilization by forming transmembrane pores (in vitro). Causes lysis of E.coli. Exhibits antimicrobial activity against Gram-negative bacteria such as P.aeruginosa, S.typhimurium, E.aerogenes, E.coli and P.syringae, Gram-positive bacteria such as L.monocytogenes, S.epidermidis, S.pyogenes and S.aureus, as well as vancomycin-resistant enterococci (in vitro). Exhibits antimicrobial activity against methicillin-resistant S.aureus, P.mirabilis, and C.albicans in low-salt media, but not in media containing 100 mM NaCl (in vitro). Forms chiral supramolecular assemblies with quinolone signal (PQS) molecules of P.aeruginosa, which may lead to interference of bacterial quorum signaling and perturbance of bacterial biofilm formation. May form supramolecular fiber-like assemblies on bacterial membranes. Induces cytokine and chemokine producation as well as TNF/TNFA and CSF2/GMCSF production in normal human keratinocytes. Exhibits hemolytic activity against red blood cells. Functionally, exhibits antimicrobial activity against E.coli and B.megaterium (in vitro). The chain is Cathelicidin antimicrobial peptide from Trachypithecus obscurus (Dusky leaf-monkey).